A 408-amino-acid polypeptide reads, in one-letter code: Neutral cholesterol ester hydrolase 1 (408 aa).

The Cytoplasmic segment spans residues 1 to 4 (MRSS). The helical; Signal-anchor for type II membrane protein transmembrane segment at 5-25 (CVLLAALLALVAYYVYIPLPS) threads the bilayer. Topologically, residues 26 to 408 (AVSDPWKLML…SYFKWLDQNL (383 aa)) are lumenal. Residues 113-115 (HGG) carry the Involved in the stabilization of the negatively charged intermediate by the formation of the oxyanion hole motif. S191 is a catalytic residue. N270 is a glycosylation site (N-linked (GlcNAc...) asparagine). D348 is a catalytic residue. N367 is a glycosylation site (N-linked (GlcNAc...) asparagine). The active site involves H378. The N-linked (GlcNAc...) asparagine glycan is linked to N389.

It belongs to the 'GDXG' lipolytic enzyme family. In terms of processing, N-glycosylated.

The protein localises to the cell membrane. Its subcellular location is the microsome. It catalyses the reaction a 1-O-alkyl-2-acetyl-sn-glycerol + H2O = a 1-O-alkyl-sn-glycerol + acetate + H(+). It carries out the reaction 1-O-hexadecyl-2-acetyl-sn-glycerol + H2O = 1-O-hexadecyl-sn-glycerol + acetate + H(+). The enzyme catalyses a cholesterol ester + H2O = cholesterol + a fatty acid + H(+). The catalysed reaction is cholesteryl (9Z-octadecenoate) + H2O = cholesterol + (9Z)-octadecenoate + H(+). In terms of biological role, hydrolyzes 2-acetyl monoalkylglycerol ether (1-O-alkyl-2-acetyl-sn-glycerol), the penultimate precursor of the pathway for de novo synthesis of platelet-activating factor. May be responsible for the hydrolysis of cholesterol esters (such as cholesteryl (9Z-octadecenoate)) in macrophages. Also involved in organ detoxification by hydrolyzing exogenous organophosphorus compounds. The chain is Neutral cholesterol ester hydrolase 1 (Nceh1) from Rattus norvegicus (Rat).